A 258-amino-acid chain; its full sequence is Tetraspanin-15 (258 aa).

The Cytoplasmic portion of the chain corresponds to 1–20; that stretch reads MGALGDSAYGARGRLIKFSY. Residues 21–41 form a helical membrane-spanning segment; sequence IVTALISILFSISCICYGIWL. Residues 42–62 lie on the Extracellular side of the membrane; sequence LARRSQYAELVSPSLYVDVGR. Residues 63–83 form a helical membrane-spanning segment; that stretch reads ILVIISILSILNYLICFYAIF. The Cytoplasmic segment spans residues 84 to 93; the sequence is KEMRCFVTSC. Residues 94-114 traverse the membrane as a helical segment; it reads AVASIVIAVMLIIGGCIGLNF. Topologically, residues 115–223 are extracellular; it reads RDQLTHYTPL…STCYEPLQND (109 aa). A helical transmembrane segment spans residues 224-244; the sequence is LLHVMNVASWLCITNAIVQII. The Cytoplasmic segment spans residues 245-258; the sequence is PSVAGCWYSKLIRK.

Belongs to the tetraspanin (TM4SF) family. Interacts with doxa-1 and bli-3. As to expression, expressed in the body wall (hyp7 hypodermal syncitium), pharynx and vulva. Expressed in a punctate pattern along the thick region of the hypodermis.

Its subcellular location is the membrane. Plays a role in cuticle biogenesis. In complex with doxa-1 and the dual oxidase bli-3, promotes the generation of reactive oxygen species (ROS) and tyrosine cross-linking of collagen, thus stabilizing cuticular extracellular matrix. This chain is Tetraspanin-15, found in Caenorhabditis elegans.